The chain runs to 247 residues: MQQAANREAFEARLRAVGEARYHDKHPFHQQLHGGQCSMIQVRAWVINRYYYQSRIPMKDAAFLSRCEDPQLRRAWRNRIEDHDGGVDEGGGIRRWLKLAEAVGLDPDYVASTRGVLAGTRFAVEAYVHFVREKPMLEAVASSLTEMFAPAIHANRIAGLIEHYAFANDSALAYFRQRLNEAPKEVAFGLNYVLDHADTLEKQDASVAALTFKTDVLWSQLDALSHAYVSPGLIPPGGWDGREGVIS.

The protein belongs to the PqqC family.

The catalysed reaction is 6-(2-amino-2-carboxyethyl)-7,8-dioxo-1,2,3,4,7,8-hexahydroquinoline-2,4-dicarboxylate + 3 O2 = pyrroloquinoline quinone + 2 H2O2 + 2 H2O + H(+). Its pathway is cofactor biosynthesis; pyrroloquinoline quinone biosynthesis. In terms of biological role, ring cyclization and eight-electron oxidation of 3a-(2-amino-2-carboxyethyl)-4,5-dioxo-4,5,6,7,8,9-hexahydroquinoline-7,9-dicarboxylic-acid to PQQ. The polypeptide is Pyrroloquinoline-quinone synthase (Rhizobium rhizogenes (strain K84 / ATCC BAA-868) (Agrobacterium radiobacter)).